The following is a 71-amino-acid chain: Beta-defensin 124 (71 aa).

Residues 1–22 (MTQLLLFLVALLVLGHVPSGRS) form the signal peptide. 3 cysteine pairs are disulfide-bonded: Cys-27-Cys-54, Cys-34-Cys-48, and Cys-38-Cys-55.

The protein belongs to the beta-defensin family.

Its subcellular location is the secreted. Its function is as follows. Has antibacterial activity. This chain is Beta-defensin 124 (DEFB124), found in Pan troglodytes (Chimpanzee).